The primary structure comprises 536 residues: 1,4-beta-D-glucan cellobiohydrolase B (536 aa).

An N-terminal signal peptide occupies residues 1-21 (MSSFQIYRAALLLSILATANA). A catalytic region spans residues 22–458 (QQVGTYTTET…SNIKFGPIGS (437 aa)). E233 functions as the Nucleophile in the catalytic mechanism. E238 serves as the catalytic Proton donor. Residues N351 and N414 are each glycosylated (N-linked (GlcNAc...) asparagine). The ser/Thr-rich linker stretch occupies residues 459 to 500 (TYSSGSSSGSGSSSSSSSTTTKATSTTLKTTSTTSSGSSSTS). A disordered region spans residues 464-499 (SSSGSGSSSSSSSTTTKATSTTLKTTSTTSSGSSST). Residues 500–536 (SAAQAYGQCGGQGWTGPTTCVSGYTCTYENAYYSQCL) form the CBM1 domain. Intrachain disulfides connect C508/C525 and C519/C535.

It belongs to the glycosyl hydrolase 7 (cellulase C) family.

The protein localises to the secreted. The catalysed reaction is Hydrolysis of (1-&gt;4)-beta-D-glucosidic linkages in cellulose and cellotetraose, releasing cellobiose from the non-reducing ends of the chains.. In terms of biological role, the biological conversion of cellulose to glucose generally requires three types of hydrolytic enzymes: (1) Endoglucanases which cut internal beta-1,4-glucosidic bonds; (2) Exocellobiohydrolases that cut the disaccharide cellobiose from the non-reducing end of the cellulose polymer chain; (3) Beta-1,4-glucosidases which hydrolyze the cellobiose and other short cello-oligosaccharides to glucose. The polypeptide is 1,4-beta-D-glucan cellobiohydrolase B (cbhB) (Aspergillus niger).